Reading from the N-terminus, the 248-residue chain is Ubiquinone biosynthesis O-methyltransferase (248 aa).

Residues Arg41, Gly72, Asp93, and Met136 each contribute to the S-adenosyl-L-methionine site.

Belongs to the methyltransferase superfamily. UbiG/COQ3 family.

The catalysed reaction is a 3-demethylubiquinol + S-adenosyl-L-methionine = a ubiquinol + S-adenosyl-L-homocysteine + H(+). It catalyses the reaction a 3-(all-trans-polyprenyl)benzene-1,2-diol + S-adenosyl-L-methionine = a 2-methoxy-6-(all-trans-polyprenyl)phenol + S-adenosyl-L-homocysteine + H(+). Its pathway is cofactor biosynthesis; ubiquinone biosynthesis. Its function is as follows. O-methyltransferase that catalyzes the 2 O-methylation steps in the ubiquinone biosynthetic pathway. The polypeptide is Ubiquinone biosynthesis O-methyltransferase (Bartonella bacilliformis (strain ATCC 35685 / KC583 / Herrer 020/F12,63)).